We begin with the raw amino-acid sequence, 423 residues long: Amino acid transporter AVT1J (423 aa).

Helical transmembrane passes span 39 to 59 (CFHG…YALA), 63 to 83 (WLSL…AILI), 110 to 130 (VIVS…FLIL), 151 to 171 (FQGK…SVWL), 186 to 206 (FASG…GVGF), 219 to 239 (VATS…FPTL), 252 to 272 (VMII…VLGY), 297 to 317 (AIWT…TPII), 333 to 355 (ASGF…LLPF), 359 to 381 (LMSL…LCYL), and 390 to 410 (LGFE…VVIT).

This sequence belongs to the amino acid/polyamine transporter 2 family. Amino acid/auxin permease (AAAP) (TC 2.A.18.5) subfamily.

It localises to the membrane. The sequence is that of Amino acid transporter AVT1J from Arabidopsis thaliana (Mouse-ear cress).